The chain runs to 154 residues: Small heat shock protein C2 (154 aa).

Residues S43–G154 enclose the sHSP domain.

The protein belongs to the small heat shock protein (HSP20) family.

The chain is Small heat shock protein C2 (hspC2) from Rickettsia felis (strain ATCC VR-1525 / URRWXCal2) (Rickettsia azadi).